A 347-amino-acid polypeptide reads, in one-letter code: NADH-ubiquinone oxidoreductase chain 2 (347 aa).

Transmembrane regions (helical) follow at residues 3–23 (PLIL…VMMS), 25–45 (HWLM…PLLM), 59–79 (YFLT…INLL), 96–116 (IIMT…FWVP), 148–170 (GINL…WGGL), 178–198 (ILAY…AFNP), 200–220 (MTLL…MLFM), 247–267 (IMLS…WMII), 276–296 (ITLA…YMRL), and 326–346 (LPML…ITLL).

Belongs to the complex I subunit 2 family. Core subunit of respiratory chain NADH dehydrogenase (Complex I) which is composed of 45 different subunits. Interacts with TMEM242.

The protein localises to the mitochondrion inner membrane. The enzyme catalyses a ubiquinone + NADH + 5 H(+)(in) = a ubiquinol + NAD(+) + 4 H(+)(out). Functionally, core subunit of the mitochondrial membrane respiratory chain NADH dehydrogenase (Complex I) which catalyzes electron transfer from NADH through the respiratory chain, using ubiquinone as an electron acceptor. Essential for the catalytic activity and assembly of complex I. This chain is NADH-ubiquinone oxidoreductase chain 2, found in Saccopteryx leptura (Lesser sac-winged bat).